A 623-amino-acid polypeptide reads, in one-letter code: Laccase-1 (623 aa).

Residues 1-22 (MKTFTSALALVVGMLAPGAVVA) form the signal peptide. Residues 23 to 50 (APPSTPAQRDLVELREARQEGGKDLRPR) constitute a propeptide that is removed on maturation. Cysteines 54 and 62 form a disulfide. 2 N-linked (GlcNAc...) asparagine glycosylation sites follow: Asn-89 and Asn-138. 4 residues coordinate Cu cation: His-143, His-145, His-188, and His-190. 2 cysteine pairs are disulfide-bonded: Cys-164/Cys-590 and Cys-348/Cys-382. Asn-251, Asn-266, Asn-294, and Asn-339 each carry an N-linked (GlcNAc...) asparagine glycan. Residues Asn-426 and Asn-446 are each glycosylated (N-linked (GlcNAc...) asparagine). His-481, His-484, His-486, His-552, Cys-553, His-554, and His-558 together coordinate Cu cation. The propeptide occupies 610–623 (KRRRWVEESEWLVR).

This sequence belongs to the multicopper oxidase family. As to quaternary structure, monomer. Cu cation is required as a cofactor. Secreted protein; extracellular space.

It catalyses the reaction 4 hydroquinone + O2 = 4 benzosemiquinone + 2 H2O. Functionally, lignin degradation and detoxification of lignin-derived products. This Melanocarpus albomyces protein is Laccase-1 (LAC1).